A 363-amino-acid chain; its full sequence is Spermidine/putrescine import ATP-binding protein PotA (363 aa).

In terms of domain architecture, ABC transporter spans 5 to 236 (IKLKHVRKEY…PVNDFVARFI (232 aa)). ATP is bound at residue 38–45 (GPSGSGKT).

Belongs to the ABC transporter superfamily. Spermidine/putrescine importer (TC 3.A.1.11.1) family. As to quaternary structure, the complex is composed of two ATP-binding proteins (PotA), two transmembrane proteins (PotB and PotC) and a solute-binding protein (PotD).

It localises to the cell membrane. It carries out the reaction ATP + H2O + polyamine-[polyamine-binding protein]Side 1 = ADP + phosphate + polyamineSide 2 + [polyamine-binding protein]Side 1.. Part of the ABC transporter complex PotABCD involved in spermidine/putrescine import. Responsible for energy coupling to the transport system. This is Spermidine/putrescine import ATP-binding protein PotA from Lactobacillus johnsonii (strain CNCM I-12250 / La1 / NCC 533).